The sequence spans 378 residues: Carbazole 1,9a-dioxygenase, terminal oxygenase component CarAa (378 aa).

Positions 29–135 constitute a Rieske domain; that stretch reads WYPVRLASEI…VEEAKGLIFV (107 aa). [2Fe-2S] cluster is bound by residues Cys-69, His-71, Cys-90, and His-93.

In terms of assembly, homotrimer. Carbazole 1,9a-dioxygenase complex consists of a terminal oxygenase component CarAa, a ferredoxin reductase component fdr and a ferredoxin component CarAc. [2Fe-2S] cluster serves as cofactor.

The enzyme catalyses 9H-carbazole + NADH + O2 + H(+) = 2'-aminobiphenyl-2,3-diol + NAD(+). It carries out the reaction 9H-carbazole + NADPH + O2 + H(+) = 2'-aminobiphenyl-2,3-diol + NADP(+). Functionally, part of the multicomponent carbazole 1,9a-dioxygenase (CARDO), that converts carbazole (CAR) into 2-aminobiphenyl-2,3-diol. Catalyzes the dioxygenation at the angular (C-9a) and adjacent (C-1) positions of carbazole to yield a highly unstable cis-hydrodiol intermediate which is spontaneously converted to 2-aminobiphenyl-2,3-diol. This chain is Carbazole 1,9a-dioxygenase, terminal oxygenase component CarAa (carAa), found in Sphingomonas sp.